An 86-amino-acid polypeptide reads, in one-letter code: Small ribosomal subunit protein uS15c (86 aa).

Belongs to the universal ribosomal protein uS15 family. Part of the 30S ribosomal subunit.

It localises to the plastid. The chain is Small ribosomal subunit protein uS15c (rps15) from Cuscuta gronovii (Common dodder).